A 210-amino-acid polypeptide reads, in one-letter code: Protein-L-isoaspartate O-methyltransferase (210 aa).

Residue serine 54 is part of the active site.

This sequence belongs to the methyltransferase superfamily. L-isoaspartyl/D-aspartyl protein methyltransferase family.

It localises to the cytoplasm. The enzyme catalyses [protein]-L-isoaspartate + S-adenosyl-L-methionine = [protein]-L-isoaspartate alpha-methyl ester + S-adenosyl-L-homocysteine. Functionally, catalyzes the methyl esterification of L-isoaspartyl residues in peptides and proteins that result from spontaneous decomposition of normal L-aspartyl and L-asparaginyl residues. It plays a role in the repair and/or degradation of damaged proteins. In Methanothrix thermoacetophila (strain DSM 6194 / JCM 14653 / NBRC 101360 / PT) (Methanosaeta thermophila), this protein is Protein-L-isoaspartate O-methyltransferase.